We begin with the raw amino-acid sequence, 2139 residues long: U5 small nuclear ribonucleoprotein 200 kDa helicase (2139 aa).

Phosphoserine occurs at positions 17 and 26. The segment at 39-80 is disordered; sequence EVLSLVGKLEGTRMGDKAQRTKPQMQEERRAKRRKRDEDRHD. Lys46 participates in a covalent cross-link: Glycyl lysine isopeptide (Lys-Gly) (interchain with G-Cter in SUMO2). The span at 48–80 shows a compositional bias: basic and acidic residues; that stretch reads EGTRMGDKAQRTKPQMQEERRAKRRKRDEDRHD. A coiled-coil region spans residues 54–84; sequence DKAQRTKPQMQEERRAKRRKRDEDRHDINKM. Residue Ser225 is modified to Phosphoserine. The residue at position 389 (Thr389) is a Phosphothreonine. An interaction with C9orf78 and WBP4 region spans residues 395 to 2132; sequence DLDQGGEALA…YKFSVDVKEA (1738 aa). The 184-residue stretch at 490–673 folds into the Helicase ATP-binding 1 domain; sequence RAALETDENL…FLRVDPAKGL (184 aa). 503-510 provides a ligand contact to ATP; that stretch reads APTGAGKT. The DEAH box motif lies at 615–618; sequence DEIH. The 238-residue stretch at 684–921 folds into the Helicase C-terminal 1 domain; it reads PLEQTYVGIT…NAKDAVNWLG (238 aa). Tyr709 is subject to Phosphotyrosine. A Glycyl lysine isopeptide (Lys-Gly) (interchain with G-Cter in SUMO) cross-link involves residue Lys944. Residue Lys971 is modified to N6-acetyllysine; alternate. Lys971 participates in a covalent cross-link: Glycyl lysine isopeptide (Lys-Gly) (interchain with G-Cter in SUMO); alternate. An SEC63 1 domain is found at 982-1289; that stretch reads TELGRIASHY…SCETQLPVSF (308 aa). Residues Lys1071 and Lys1199 each participate in a glycyl lysine isopeptide (Lys-Gly) (interchain with G-Cter in SUMO) cross-link. The tract at residues 1285-2139 is interaction with TSSC4; the sequence is LPVSFRHLIL…KEAETDSDSD (855 aa). Residues 1340-1515 form the Helicase ATP-binding 2 domain; it reads NTVYNSDDNV…WLGCSATSTF (176 aa). Residue 1353-1360 participates in ATP binding; the sequence is APTGSGKT. Residue Thr1431 is modified to Phosphothreonine. Positions 1457-1460 match the DEAH box motif; it reads DEVH. Residues 1548–1756 enclose the Helicase C-terminal 2 domain; the sequence is PVYHAITKHS…TIENKQDAVD (209 aa). Thr1768 is subject to Phosphothreonine. An SEC63 2 domain is found at 1815 to 2127; that stretch reads PLNLGMIAAY…GCDQEYKFSV (313 aa). A Phosphoserine modification is found at Ser2005. Lys2094 is covalently cross-linked (Glycyl lysine isopeptide (Lys-Gly) (interchain with G-Cter in SUMO)). At Thr2134 the chain carries Phosphothreonine. Residues Ser2136 and Ser2138 each carry the phosphoserine modification.

Belongs to the helicase family. SKI2 subfamily. As to quaternary structure, component of a core complex containing at least PRPF8, SNRNP200, EFTUD2 and SNRNP40. Component of the U5 snRNP and U4/U6-U5 tri-snRNP complexes, building blocks of the spliceosome. Component of the U4/U6-U5 tri-snRNP complex composed of the U4, U6 and U5 snRNAs and at least PRPF3, PRPF4, PRPF6, PRPF8, PRPF31, SNRNP200, TXNL4A, SNRNP40, DDX23, CD2BP2, PPIH, SNU13, EFTUD2, SART1 and USP39. Component of precatalytic, catalytic and postcatalytic spliceosomal complexes. Component of the minor spliceosome, which splices U12-type introns. Interacts with C9orf78; the interaction is direct and mutually exclusive with its interaction with WBP4. Interacts with WBP4; the interaction is mutually exclusive with its interaction with C9orf78. Interacts with PRPF8. Interacts with TSSC4; the interaction is direct, excludes recruitment of C9ORF78 and WBP4 to SNRNP200 and negatively regulates its RNA helicase activity.

The protein resides in the nucleus. The catalysed reaction is ATP + H2O = ADP + phosphate + H(+). Its function is as follows. Catalyzes the ATP-dependent unwinding of U4/U6 RNA duplices, an essential step in the assembly of a catalytically active spliceosome. Plays a role in pre-mRNA splicing as core component of precatalytic, catalytic and postcatalytic spliceosomal complexes. As a component of the minor spliceosome, involved in the splicing of U12-type introns in pre-mRNAs. Involved in spliceosome assembly, activation and disassembly. Mediates changes in the dynamic network of RNA-RNA interactions in the spliceosome. In Rattus norvegicus (Rat), this protein is U5 small nuclear ribonucleoprotein 200 kDa helicase (Snrnp200).